The primary structure comprises 431 residues: Homeobox protein knotted-1-like 3 (431 aa).

Positions Asn15–Trp47 are disordered. Residues Gln22–Gln34 are compositionally biased toward pro residues. Residues Glu322–Ile342 enclose the ELK domain. A DNA-binding region (homeobox; TALE-type) is located at residues Leu343–Asn406. The tract at residues Asn402–Ala431 is disordered. A compositionally biased stretch (polar residues) spans His404–Leu413.

This sequence belongs to the TALE/KNOX homeobox family. May form heterodimeric complex with the TALE/BELL proteins. Interacts with OFP1, OFP2, OFP4, OFP12 and OFP14. Interacts with KNATM-B.

The protein resides in the nucleus. The sequence is that of Homeobox protein knotted-1-like 3 (KNAT3) from Arabidopsis thaliana (Mouse-ear cress).